The chain runs to 7524 residues: Mucin-19 (7524 aa).

The N-terminal stretch at 1–20 (MKLILLYLAVVLCFVGKGAA) is a signal peptide. The segment at 20-47 (ARSPTTTRTPTPSTSEKASHVPEATPTY) is disordered. A compositionally biased stretch (low complexity) spans 21 to 34 (RSPTTTRTPTPSTS). Positions 55–225 (GEATMWGKDK…VCEDGVQYCD (171 aa)) constitute a VWFD 1 domain. Cys-79 and Cys-224 are oxidised to a cystine. In terms of domain architecture, TIL spans 298-353 (CPGKHIYKECGPSNPPTCSNVAPFQDSECVSGCTCPEGYLLDDIGEKGKCVLKEKC). 2 consecutive VWFD domains span residues 392 to 568 (GICK…EGSP) and 851 to 1025 (STCH…QECS). Intrachain disulfides connect Cys-394/Cys-529, Cys-434/Cys-442, Cys-853/Cys-989, Cys-875/Cys-1024, Cys-884/Cys-986, and Cys-900/Cys-907. The span at 1244–1261 (AAATRASSSTSGSVETSV) shows a compositional bias: low complexity. 2 disordered regions span residues 1244-7217 (AAAT…SSLA) and 7249-7297 (SVIK…CPDS). Polar residues predominate over residues 1262–1289 (PATTSTSKAQAHITTASSTETSALNSTA). Low complexity-rich tracts occupy residues 1320 to 7099 (PAVS…AGSG) and 7112 to 7217 (STSG…SSLA). 36 consecutive repeat copies span residues 1321-1483 (AVST…TTGP), 1484-1646 (AVST…TTGP), 1647-1809 (AVST…TTGP), 1810-1972 (AVST…TTGP), 1973-2135 (AVST…TTGP), 2136-2298 (AVST…TTGP), 2299-2461 (AVST…TTGP), 2462-2624 (AVST…TTGP), 2625-2787 (AVST…TTGP), 2788-2950 (AVST…TTGP), 2951-3113 (AVST…TTGP), 3114-3276 (AVST…TTGP), 3277-3439 (AVST…TTGP), 3440-3602 (AVST…TTGP), 3603-3765 (AVST…TTGP), 3766-3928 (AVST…TTGP), 3929-4091 (AVST…TTGP), 4092-4254 (AVST…TTGP), 4255-4417 (AVST…TTGP), 4418-4580 (AVST…TTGP), 4581-4743 (AVST…TTGP), 4744-4906 (AVST…TTGP), 4907-5069 (AVST…TTGP), 5070-5232 (AVST…TTGP), 5233-5395 (AVST…TTGP), 5396-5558 (AVST…TTGP), 5559-5721 (AVST…TTGP), 5722-5884 (AVST…TTGP), 5885-6047 (AVST…TTGP), 6048-6210 (AVST…TTGP), 6211-6373 (AVST…TTGP), 6374-6536 (AVST…TTGP), 6537-6699 (AVST…TTGP), 6700-6862 (AVST…TTGP), 6863-7025 (AVST…TTGP), and 7026-7188 (AVST…TTGP). The approximate repeats stretch occupies residues 1321–7188 (AVSTTSAGST…AETAGSTTGP (5868 aa)). Positions 7261 to 7291 (AKSNETTGRTTSMPASTSVAPGVTTSPNISQ) are enriched in polar residues. 2 consecutive VWFC domains span residues 7302–7368 (PVCH…GHCE) and 7370–7432 (RTCL…YKCK). Intrachain disulfides connect Cys-7435-Cys-7482, Cys-7449-Cys-7496, Cys-7458-Cys-7512, and Cys-7462-Cys-7514. The CTCK domain maps to 7435 to 7519 (CRTTPVNVTV…TTCSCRDQCE (85 aa)).

As to expression, specifically expressed in sublingual salivary glands. Expressed by mucous cells of the submandibular gland and submucosal gland of the trachea. Expression is altered in sld (sublingual gland differentiation arrest) mutants.

It localises to the secreted. May function in ocular mucus homeostasis. The chain is Mucin-19 (Muc19) from Mus musculus (Mouse).